We begin with the raw amino-acid sequence, 226 residues long: 2-C-methyl-D-erythritol 4-phosphate cytidylyltransferase (226 aa).

Belongs to the IspD/TarI cytidylyltransferase family. IspD subfamily.

It carries out the reaction 2-C-methyl-D-erythritol 4-phosphate + CTP + H(+) = 4-CDP-2-C-methyl-D-erythritol + diphosphate. Its pathway is isoprenoid biosynthesis; isopentenyl diphosphate biosynthesis via DXP pathway; isopentenyl diphosphate from 1-deoxy-D-xylulose 5-phosphate: step 2/6. Its function is as follows. Catalyzes the formation of 4-diphosphocytidyl-2-C-methyl-D-erythritol from CTP and 2-C-methyl-D-erythritol 4-phosphate (MEP). The protein is 2-C-methyl-D-erythritol 4-phosphate cytidylyltransferase of Bacillus mycoides (strain KBAB4) (Bacillus weihenstephanensis).